The following is a 412-amino-acid chain: Gamma-glutamyl phosphate reductase (412 aa).

This sequence belongs to the gamma-glutamyl phosphate reductase family.

The protein localises to the cytoplasm. The catalysed reaction is L-glutamate 5-semialdehyde + phosphate + NADP(+) = L-glutamyl 5-phosphate + NADPH + H(+). It functions in the pathway amino-acid biosynthesis; L-proline biosynthesis; L-glutamate 5-semialdehyde from L-glutamate: step 2/2. Functionally, catalyzes the NADPH-dependent reduction of L-glutamate 5-phosphate into L-glutamate 5-semialdehyde and phosphate. The product spontaneously undergoes cyclization to form 1-pyrroline-5-carboxylate. In Actinobacillus pleuropneumoniae serotype 5b (strain L20), this protein is Gamma-glutamyl phosphate reductase.